Reading from the N-terminus, the 1938-residue chain is Autophagy-related protein 2 homolog A (1938 aa).

In terms of domain architecture, Chorein N-terminal spans 14–111 (ERVCRYLLHH…QLTLQPRRGP (98 aa)). Phosphoserine occurs at positions 765, 878, 892, 894, 1266, 1301, and 1309. A disordered region spans residues 1242-1272 (DLHPPPRPPSPTEIAGQKLSESPASLPSCPP). Positions 1315 to 1359 (LFPGERSGAPPPSPPVGGPAGSLGSCSEEKEDEREEEGDGDTLDS) are disordered. The span at 1343–1359 (EKEDEREEEGDGDTLDS) shows a compositional bias: acidic residues. Positions 1358-1404 (DSDEFCILDAPGLGIPPRDGEPVVTQLHPGPIVVRDGYFSRPIGSTD) are WIPI-interacting. Ser-1402 carries the post-translational modification Phosphoserine. Disordered regions lie at residues 1438–1476 (PHPGHRARTGLSGPRSSPSRCSGPNRPQNSWRTQGGSGR) and 1614–1657 (GETS…PSPP). The segment covering 1446–1464 (TGLSGPRSSPSRCSGPNRP) has biased composition (low complexity).

Belongs to the ATG2 family. Interacts with ATG9A (via C-terminus). Interacts (via WIPI-interacting region) with WDR45B/WIPI3. Interacts (via WIPI-interacting region) with WDR45/WIPI4. Interacts with TMEM41B. Interacts with VMP1.

Its subcellular location is the preautophagosomal structure membrane. The protein resides in the lipid droplet. It localises to the endoplasmic reticulum membrane. The enzyme catalyses a 1,2-diacyl-sn-glycero-3-phospho-L-serine(in) = a 1,2-diacyl-sn-glycero-3-phospho-L-serine(out). It catalyses the reaction a 1,2-diacyl-sn-glycero-3-phosphoethanolamine(in) = a 1,2-diacyl-sn-glycero-3-phosphoethanolamine(out). Its function is as follows. Lipid transfer protein involved in autophagosome assembly. Tethers the edge of the isolation membrane (IM) to the endoplasmic reticulum (ER) and mediates direct lipid transfer from ER to IM for IM expansion. Binds to the ER exit site (ERES), which is the membrane source for autophagosome formation, and extracts phospholipids from the membrane source and transfers them to ATG9 (ATG9A or ATG9B) to the IM for membrane expansion. Lipid transfer activity is enhanced by WIPI1 and WDR45/WIPI4, which promote ATG2A-association with phosphatidylinositol 3-monophosphate (PI3P)-containing membranes. Also regulates lipid droplets morphology and distribution within the cell. The protein is Autophagy-related protein 2 homolog A of Homo sapiens (Human).